The sequence spans 282 residues: HTH-type transcriptional activator RhaR (282 aa).

The HTH araC/xylS-type domain maps to 179–277 (DKLITRLAAS…GMTPSQWRHL (99 aa)). 2 DNA-binding regions (H-T-H motif) span residues 196–217 (DKFCDEASCSERVLRQQFRQQT) and 244–267 (ISDISTECGFEDSNYFSVVFTRET).

In terms of assembly, binds DNA as a dimer.

The protein localises to the cytoplasm. Functionally, activates expression of the rhaSR operon in response to L-rhamnose. This Shigella flexneri serotype 5b (strain 8401) protein is HTH-type transcriptional activator RhaR.